Reading from the N-terminus, the 128-residue chain is Lutropin subunit beta (128 aa).

6 cysteine pairs are disulfide-bonded: C18/C66, C32/C81, C35/C119, C43/C97, C47/C99, and C102/C109. A glycan (N-linked (GlcNAc...) asparagine) is linked at N22.

The protein belongs to the glycoprotein hormones subunit beta family. As to quaternary structure, heterodimer of a common alpha chain and a unique beta chain which confers biological specificity to thyrotropin, lutropin, follitropin and gonadotropin.

Its subcellular location is the secreted. Functionally, promotes spermatogenesis and ovulation by stimulating the testes and ovaries to synthesize steroids. The protein is Lutropin subunit beta (LHB) of Struthio camelus (Common ostrich).